The sequence spans 232 residues: Putative N-acetylmannosamine-6-phosphate 2-epimerase (232 aa).

Belongs to the NanE family.

The catalysed reaction is an N-acyl-D-glucosamine 6-phosphate = an N-acyl-D-mannosamine 6-phosphate. The protein operates within amino-sugar metabolism; N-acetylneuraminate degradation; D-fructose 6-phosphate from N-acetylneuraminate: step 3/5. In terms of biological role, converts N-acetylmannosamine-6-phosphate (ManNAc-6-P) to N-acetylglucosamine-6-phosphate (GlcNAc-6-P). The sequence is that of Putative N-acetylmannosamine-6-phosphate 2-epimerase from Proteus mirabilis (strain HI4320).